A 356-amino-acid chain; its full sequence is Phosphoribosylformylglycinamidine cyclo-ligase (356 aa).

Belongs to the AIR synthase family.

The protein resides in the cytoplasm. The enzyme catalyses 2-formamido-N(1)-(5-O-phospho-beta-D-ribosyl)acetamidine + ATP = 5-amino-1-(5-phospho-beta-D-ribosyl)imidazole + ADP + phosphate + H(+). The protein operates within purine metabolism; IMP biosynthesis via de novo pathway; 5-amino-1-(5-phospho-D-ribosyl)imidazole from N(2)-formyl-N(1)-(5-phospho-D-ribosyl)glycinamide: step 2/2. The chain is Phosphoribosylformylglycinamidine cyclo-ligase from Sinorhizobium medicae (strain WSM419) (Ensifer medicae).